The chain runs to 365 residues: uncharacterized protein (365 aa).

31–38 contributes to the ATP binding site; that stretch reads GPINSGKT.

This sequence belongs to the archaeal ATPase family.

This is an uncharacterized protein from Methanocaldococcus jannaschii (strain ATCC 43067 / DSM 2661 / JAL-1 / JCM 10045 / NBRC 100440) (Methanococcus jannaschii).